The following is a 326-amino-acid chain: Transmembrane protein PVRIG (326 aa).

The next 3 membrane-spanning stretches (helical) occupy residues Leu26–Val46, Cys62–Gly78, and Leu172–Leu192. Position 233 is a phosphotyrosine (Tyr233). The interval Ala296–Arg326 is disordered.

Interacts with NECTIN2, hence competing with CD226. As to expression, expressed in some types of immune cells. Expressed at low levels on the surface of freshly isolated T-cells and natural killer (NK) cells, predominantly on CD8+ T-cells (mainly memory/effector, but not naive cells) and on both CD16+ and CD16- NK cells. T-cell expression levels are variable among individuals. Not detected in B-cells, naive or helper T-cells, monocytes, nor neutrophils (at protein level). Not detected in dendritic cells.

Its subcellular location is the cell membrane. Functionally, cell surface receptor for NECTIN2. May act as a coinhibitory receptor that suppresses T-cell receptor-mediated signals. Following interaction with NECTIN2, inhibits T-cell proliferation. Competes with CD226 for NECTIN2-binding. The protein is Transmembrane protein PVRIG (PVRIG) of Homo sapiens (Human).